Here is a 417-residue protein sequence, read N- to C-terminus: UDP-N-acetylglucosamine 1-carboxyvinyltransferase (417 aa).

Residue 22–23 participates in phosphoenolpyruvate binding; it reads KN. R91 contributes to the UDP-N-acetyl-alpha-D-glucosamine binding site. Residue C115 is the Proton donor of the active site. C115 is modified (2-(S-cysteinyl)pyruvic acid O-phosphothioketal). Residues 120-124, D304, and I326 each bind UDP-N-acetyl-alpha-D-glucosamine; that span reads RPVDL.

It belongs to the EPSP synthase family. MurA subfamily.

The protein resides in the cytoplasm. It carries out the reaction phosphoenolpyruvate + UDP-N-acetyl-alpha-D-glucosamine = UDP-N-acetyl-3-O-(1-carboxyvinyl)-alpha-D-glucosamine + phosphate. It functions in the pathway cell wall biogenesis; peptidoglycan biosynthesis. Functionally, cell wall formation. Adds enolpyruvyl to UDP-N-acetylglucosamine. This is UDP-N-acetylglucosamine 1-carboxyvinyltransferase from Nitratidesulfovibrio vulgaris (strain ATCC 29579 / DSM 644 / CCUG 34227 / NCIMB 8303 / VKM B-1760 / Hildenborough) (Desulfovibrio vulgaris).